A 555-amino-acid polypeptide reads, in one-letter code: Cytochrome P450 monooxygeanse terQ (555 aa).

A helical transmembrane segment spans residues 10–30 (VPAHAWPTITVAGAVMVVVLL). Cys479 provides a ligand contact to heme. The tract at residues 535–555 (DAGNTARVDPGAPDGVASEPS) is disordered.

The protein belongs to the cytochrome P450 family. The cofactor is heme.

It localises to the membrane. It functions in the pathway secondary metabolite biosynthesis. Functionally, cytochrome P450 monooxygeanse; part of the gene cluster that mediates the biosynthesis of terpendoles, indole-diterpene (IDT) mycotoxins including terpendole I, terpendole K, terpendole C, as well as the kinesin Eg5 inhibitor terpendole E. TerQ is a C11-hydroxylating enzyme that converts paspalline into terpendole E. Is also able to hydroxylate 13-desoxyterpendole I at C-13 to produce terpendole I. Terpendoles biosynthesis begins with the synthesis of geranylgeranyl diphosphate (GGPP) by a yet unidentified GGPP synthase. Condensation of indole-3-glycerol phosphate with GGPP by the prenyltransferase terC then forms 3-geranylgeranylindole (3-GGI), followed by epoxidation and cyclization of this intermediate (by the FAD-dependent monooxygeanse terM and the terpene cyclase terB) to form paspaline. The cytochrome monooxygenase terQ then hydroxylates paspalline at C-11 to yield terpendole E. The cytochrome monooxygenase terP converts terpendole E to 13-desoxyterpendole I, and terQ converts 13-desoxyterpendole I into terpendole I. TerF and terK are required for conversion of terpendole I to terpendole C which is further converted to terpendole K. This is Cytochrome P450 monooxygeanse terQ from Tolypocladium album (Soil fungus).